The following is a 630-amino-acid chain: 1-deoxy-D-xylulose-5-phosphate synthase (630 aa).

Residues histidine 72 and 113–115 (GHS) contribute to the thiamine diphosphate site. Aspartate 144 is a Mg(2+) binding site. Thiamine diphosphate is bound by residues 145 to 146 (GA), asparagine 173, tyrosine 284, and glutamate 367. Asparagine 173 contributes to the Mg(2+) binding site.

The protein belongs to the transketolase family. DXPS subfamily. Homodimer. Mg(2+) serves as cofactor. The cofactor is thiamine diphosphate.

The catalysed reaction is D-glyceraldehyde 3-phosphate + pyruvate + H(+) = 1-deoxy-D-xylulose 5-phosphate + CO2. It functions in the pathway metabolic intermediate biosynthesis; 1-deoxy-D-xylulose 5-phosphate biosynthesis; 1-deoxy-D-xylulose 5-phosphate from D-glyceraldehyde 3-phosphate and pyruvate: step 1/1. Functionally, catalyzes the acyloin condensation reaction between C atoms 2 and 3 of pyruvate and glyceraldehyde 3-phosphate to yield 1-deoxy-D-xylulose-5-phosphate (DXP). This is 1-deoxy-D-xylulose-5-phosphate synthase from Bacillus cereus (strain B4264).